The chain runs to 851 residues: Transforming growth factor beta receptor type 3 (851 aa).

Positions 1-20 (MTSHYVIAIFALMSSCLATA) are cleaved as a signal peptide. Topologically, residues 21–787 (GPEPGALCEL…IFHGLDTLTV (767 aa)) are extracellular. C52 and C197 are disulfide-bonded. Residues N141 and N492 are each glycosylated (N-linked (GlcNAc...) asparagine). The ZP domain maps to 455–730 (KCDNEKMIVA…PKCVPPDEAC (276 aa)). O-linked (Xyl...) (glycosaminoglycan) serine glycosylation is found at S534 and S545. N571, N590, and N697 each carry an N-linked (GlcNAc...) asparagine glycan. Intrachain disulfides connect C639/C705, C660/C730, and C710/C723. The segment at 737 to 751 (IIWAMMQNKKTFTKP) is interaction with TGF-beta ligand. The helical transmembrane segment at 788–809 (MGIAFAAFVIGALLTGALWYIY) threads the bilayer. The Cytoplasmic portion of the chain corresponds to 810–851 (SHTGETAGRQQVPTSPPASENSSAAHSIGSTQSTPCSSSSTA). Positions 816–851 (AGRQQVPTSPPASENSSAAHSIGSTQSTPCSSSSTA) are disordered. Positions 817–834 (GRQQVPTSPPASENSSAA) are enriched in polar residues. A compositionally biased stretch (low complexity) spans 836-851 (SIGSTQSTPCSSSSTA). A Phosphothreonine modification is found at T840.

As to quaternary structure, forms homodimers and homooligomers. Interacts with DYNLT4. Interacts with integrin ITGA5:ITGB1; this interaction promotes the internalization and trafficking of ITGA5:ITGB1 into endocytic vesicles. Interacts with TGFB1, BMP2, BMP5, BMP7 or GDF5 and inhibin A via the ligand binding domains. Interacts with ALK3/BMPR1A; this interaction results in the cell surface retention of BMPR1A. Interacts with ALK6/BMPR1B; this interaction enhances BMPR1B-mediated stimulation of the BMP signaling pathway. Interacts with the scaffolding protein beta-arrestin2/ARRB2; this interaction mediates internalization of TGFBR3 and thus regulates migration, actin cytoskeleton and activation of CDC42. (Microbial infection) Interacts with human cytomegalovirus trimer complex composed of gH, gL, and gO; these interactions may promote HCMV cell entry in specific cell types. Extensively modified by glycosaminoglycan groups (GAG). Post-translationally, phosphorylated in the cytoplasmic domain by the type II receptor TGFBR2 at THR-840 to mediate recruitment of ARRB2 and subsequent internalization of TGFBR2 and TGFBR3.

The protein resides in the cell membrane. It localises to the secreted. It is found in the extracellular space. The protein localises to the extracellular matrix. In terms of biological role, cell surface receptor that regulates diverse cellular processes including cell proliferation, differentiation, migration, and apoptosis. Initiates BMP, inhibin, and TGF-beta signaling pathways by interacting with different ligands including TGFB1, BMP2, BMP5, BMP7 or GDF5. Alternatively, acts as a cell surface coreceptor for BMP ligands, serving to enhance ligand binding by differentially regulating BMPR1A/ALK3 and BMPR1B/ALK6 receptor trafficking. Promotes epithelial cell adhesion, focal adhesion formation and integrin signaling during epithelial cell spreading on fibronectin. By interacting with the scaffolding protein beta-arrestin2/ARRB2, regulates migration or actin cytoskeleton and promotes the activation of CDC42 as well as the inhibition of NF-kappa-B. In gonadotrope cells, acts as an inhibin A coreceptor and regulates follicle-stimulating hormone (FSH) levels and female fertility. Plays a role in the inhibition of directed and random cell migration in epithelial cells by altering the actin cytoskeletal organization. Participates in epithelial-mesenchymal transformation (EMT) upon binding to BMP2 or TGFB2, by activating the PAR6/SMURF1/RHOA pathway. Its function is as follows. (Microbial infection) May act as a receptor for human cytomegalovirus in different cell types by interacting with HCMV trimer composed of GO, GH and GL. The sequence is that of Transforming growth factor beta receptor type 3 from Homo sapiens (Human).